A 166-amino-acid polypeptide reads, in one-letter code: Keratin, type II cytoskeletal 68 kDa, component IB (166 aa).

The IF rod domain maps to 1–41 (EAKDDLARLLRDYQDAMNVKLALDVEIATYRKLLEGEECRM). The segment at 1–41 (EAKDDLARLLRDYQDAMNVKLALDVEIATYRKLLEGEECRM) is coil 2B. The segment at 42 to 166 (SGECPSAVSI…FSQSSQRTSR (125 aa)) is tail. The segment covering 122–146 (GFGGGSSGFGSGSGGRSGVSGGGLS) has biased composition (gly residues). Positions 122 to 166 (GFGGGSSGFGSGSGGRSGVSGGGLSSGSSRGGSVRFSQSSQRTSR) are disordered. Low complexity predominate over residues 147–166 (SGSSRGGSVRFSQSSQRTSR).

Belongs to the intermediate filament family. In terms of assembly, heterotetramer of two type I and two type II keratins.

The protein is Keratin, type II cytoskeletal 68 kDa, component IB of Bos taurus (Bovine).